Reading from the N-terminus, the 469-residue chain is Calcium-binding mitochondrial carrier protein SCaMC-2-B (469 aa).

Over 1-189 (MLCLCLYVPV…EKNTGMWWRH (189 aa)) the chain is Mitochondrial intermembrane. 3 EF-hand domains span residues 47 to 80 (SYRK…RDHE), 78 to 113 (DHEK…LGVH), and 114 to 149 (ISEE…HPAE). 5 residues coordinate Ca(2+): aspartate 60, aspartate 62, aspartate 64, glutamine 66, and glutamate 71. Solcar repeat units follow at residues 184–270 (GMWW…IKRL), 278–363 (LGIL…LKNS), and 375–463 (PGVF…LKIT). A helical transmembrane segment spans residues 190-207 (LVAGGGAGAVSRTCTAPL). Over 208–244 (DRLKVLMQVHATRSNSMGIAGGFTQMIREGGLRSLWR) the chain is Mitochondrial matrix. The chain crosses the membrane as a helical span at residues 245–264 (GNGINVLKIAPESAIKFMAY). Over 265-287 (EQIKRLIGSNQETLGILERLVSG) the chain is Mitochondrial intermembrane. The helical transmembrane segment at 288–301 (SLAGAIAQSSIYPM) threads the bilayer. Residues 302–337 (EVLKTRLALGRTGQYSGIADCAKHIFKKEGMTAFYK) are Mitochondrial matrix-facing. Residues 338 to 357 (GYIPNMLGIIPYAGIDLAVY) form a helical membrane-spanning segment. Residues 358-380 (ETLKNSWLQRFATDSADPGVFVL) are Mitochondrial intermembrane-facing. A helical transmembrane segment spans residues 381 to 398 (LACGTMSSTCGQLASYPL). Over 399–437 (ALVRTRMQAQASQEGSPQMTMSGLFRHIVRTEGAIGLYR) the chain is Mitochondrial matrix. The helical transmembrane segment at 438–457 (GLAPNFMKVIPAVSISYVVY) threads the bilayer. The Mitochondrial intermembrane portion of the chain corresponds to 458-469 (ENLKITLGVQSR).

The protein belongs to the mitochondrial carrier (TC 2.A.29) family.

It is found in the mitochondrion inner membrane. Its function is as follows. Calcium-dependent mitochondrial solute carrier. The polypeptide is Calcium-binding mitochondrial carrier protein SCaMC-2-B (slc25a25b) (Danio rerio (Zebrafish)).